Reading from the N-terminus, the 31-residue chain is Photosystem II reaction center protein T (31 aa).

The helical transmembrane segment at 3–23 threads the bilayer; it reads ALVYTFLLVGTLGIIFFSIFF.

It belongs to the PsbT family. As to quaternary structure, PSII is composed of 1 copy each of membrane proteins PsbA, PsbB, PsbC, PsbD, PsbE, PsbF, PsbH, PsbI, PsbJ, PsbK, PsbL, PsbM, PsbT, PsbY, PsbZ, Psb30/Ycf12, at least 3 peripheral proteins of the oxygen-evolving complex and a large number of cofactors. It forms dimeric complexes.

The protein localises to the plastid. The protein resides in the chloroplast thylakoid membrane. Found at the monomer-monomer interface of the photosystem II (PS II) dimer, plays a role in assembly and dimerization of PSII. PSII is a light-driven water plastoquinone oxidoreductase, using light energy to abstract electrons from H(2)O, generating a proton gradient subsequently used for ATP formation. This is Photosystem II reaction center protein T from Chlamydomonas reinhardtii (Chlamydomonas smithii).